A 1951-amino-acid polypeptide reads, in one-letter code: [F-actin]-monooxygenase MICAL2 (1951 aa).

The segment at 2 to 494 is monooxygenase domain; sequence GENEDEKQAQ…KHLYITKEMD (493 aa). FAD contacts are provided by residues Cys97, 116 to 118, 123 to 125, Phe183, Tyr298, and Asp398; these read EKR and RNN. Positions 516–619 constitute a Calponin-homology (CH) domain; it reads DIRPNKLLTW…MVMYLSKFYE (104 aa). Position 631 is a phosphoserine (Ser631). The Nuclear localization signal motif lies at 660-681; the sequence is RKRTPRVDTQTEENDMNKRRRQ. 2 disordered regions span residues 663–712 and 891–921; these read TPRV…SQNK and KRVP…AADS. The span at 691–700 shows a compositional bias: low complexity; the sequence is SFSSRSLGSS. Over residues 896 to 909 the composition is skewed to pro residues; it reads AHPPSPPSCLPSPH. Residues 910–921 are compositionally biased toward low complexity; that stretch reads PAAASSPPAADS. Residues 991–1053 enclose the LIM zinc-binding domain; that stretch reads DTCYFCKKRV…KPHFVHCKTS (63 aa). Zn(2+) contacts are provided by Cys993, Cys996, His1014, Cys1017, Cys1020, Cys1023, Cys1043, and His1046. Thr1052 is subject to Phosphoserine. Disordered regions lie at residues 1054-1141, 1158-1314, 1348-1368, 1383-1427, 1451-1476, 1489-1580, 1594-1624, 1678-1697, 1706-1731, and 1747-1766; these read SKQR…RISP, TSED…VSPT, VEPG…EGCQ, ILGK…RKLG, HKTG…TCSS, QKKA…AKKA, AQAS…STTP, GDFF…VPSL, STSM…GEGG, and PVTE…EADS. Over residues 1061–1070 the composition is skewed to basic and acidic residues; the sequence is AELNQQREEE. Composition is skewed to polar residues over residues 1129–1138, 1228–1239, and 1246–1256; these read PRPSEWTSVR, HSLQSPTPSKYQ, and QSNSTPMNQRA. A compositionally biased stretch (pro residues) spans 1257-1268; that stretch reads PSPPKEPPPPPS. Low complexity predominate over residues 1269–1285; it reads LSSSSSLPSSFSSASVP. The segment covering 1291-1306 has biased composition (polar residues); it reads DSSSPQVTYNLHSPQI. The tract at residues 1314–1353 is interaction with MAPK1; the sequence is TPIYLRRARAQGIVKEIPLYLPHSPMLESTEDCLVEPGRE. Over residues 1350–1359 the composition is skewed to basic and acidic residues; that stretch reads PGRESLRSPE. Residues 1532-1545 are compositionally biased toward basic and acidic residues; it reads EAGKKTSPKPESKT. Positions 1599–1616 are enriched in low complexity; the sequence is LSLPNSILRSRSLPSRPS. Residues 1678-1688 show a composition bias toward basic and acidic residues; sequence GDFFNSPKEEG. A Phosphoserine modification is found at Ser1683. The span at 1706–1720 shows a compositional bias: polar residues; it reads STSMGQVAHPSSTGQ. Low complexity predominate over residues 1749-1759; that stretch reads TEATSSPTSSS. The region spanning 1789 to 1939 is the bMERB domain; sequence KQEELKRLHK…ERTQDQHFEN (151 aa).

This sequence belongs to the Mical family. Interacts with PLXNA4. Interacts with RAB1B. Interacts with MAPK1/ERK2. Interacts with RAB1B, RAB35, RAB8A, RAB10, RAB13 and RAB15 (in their GTP-bound forms); binding to RAB1B and RAB35 is of low affinity compared to other Rab proteins; binding to RAB1B and RAB35 is of low affinity compared to other Rab proteins; at least in case of RAB8A may bind 2 molecules of RAB8A simultaneously through a high and a low affinity binding site, respectively. It depends on FAD as a cofactor. In terms of tissue distribution, expressed only in testis (at protein level).

It localises to the cytoplasm. The protein resides in the nucleus. The catalysed reaction is L-methionyl-[F-actin] + NADPH + O2 + H(+) = L-methionyl-(R)-S-oxide-[F-actin] + NADP(+) + H2O. In terms of biological role, methionine monooxygenase that promotes depolymerization of F-actin by mediating oxidation of residues 'Met-44' and 'Met-47' on actin to form methionine-sulfoxide, resulting in actin filament disassembly and preventing repolymerization. Regulates the disassembly of branched actin networks also by oxidizing ARP3B-containing ARP2/3 complexes leading to ARP3B dissociation from the network. Acts as a key regulator of the SRF signaling pathway elicited by nerve growth factor and serum: mediates oxidation and subsequent depolymerization of nuclear actin, leading to increase MKL1/MRTF-A presence in the nucleus and promote SRF:MKL1/MRTF-A-dependent gene transcription. Does not activate SRF:MKL1/MRTF-A through RhoA. In Mus musculus (Mouse), this protein is [F-actin]-monooxygenase MICAL2.